A 645-amino-acid polypeptide reads, in one-letter code: MLKFQEAAKCVSGSTAISTYPKTLIARRYVLQQKLGSGSFGTVYLVSDKKAKRGEELKVLKEISVGELNPNETVQANLEAQLLSKLDHPAIVKFHASFVEQDNFCIITEYCEGRDLDDKIQEYKQAGKIFPENQIIEWFIQLLLGVDYMHERRILHRDLKSKNVFLKNNLLKIGDFGVSRLLMGSCDLATTLTGTPHYMSPEALKHQGYDTKSDIWSLACILYEMCCMNHAFAGSNFLSIVLKIVEGDTPSLPERYPKELNAIMESMLNKNPSLRPSAIEILKIPYLDEQLQNLMCRYSEMTLEDKNLDCQKEAAHIINAMQKRIHLQTLRALSEVQKMTPRERMRLRKLQAADEKARKLKKIVEEKYEENSKRMQELRSRNFQQLSVDVLHEKTHLKGMEEKEEQPEGRLSCSPQDEDEERWQGREEESDEPTLENLPESQPIPSMDLHELESIVEDATSDLGYHEIPEDPLVAEEYYADAFDSYCEESDEEEEEIALERPEKEIRNEGSQPAYRTNQQDSDIEALARCLENVLGCTSLDTKTITTMAEDMSPGPPIFNSVMARTKMKRMRESAMQKLGTEVFEEVYNYLKRARHQNASEAEIRECLEKVVPQASDCFEVDQLLYFEEQLLITMGKEPTLQNHL.

The Protein kinase domain maps to 29–287; sequence YVLQQKLGSG…AIEILKIPYL (259 aa). ATP-binding positions include 35-43 and lysine 61; that span reads LGSGSFGTV. Aspartate 158 (proton acceptor) is an active-site residue. At serine 273 the chain carries Phosphoserine; by CHEK1. A coiled-coil region spans residues 346–385; the sequence is RLRKLQAADEKARKLKKIVEEKYEENSKRMQELRSRNFQQ. Positions 399-445 are disordered; it reads GMEEKEEQPEGRLSCSPQDEDEERWQGREEESDEPTLENLPESQPIP.

The protein belongs to the protein kinase superfamily. NEK Ser/Thr protein kinase family. NIMA subfamily. In terms of assembly, interacts with isoform 1 of NEK2. It depends on Mn(2+) as a cofactor. Mg(2+) is required as a cofactor. Post-translationally, phosphorylated by NEK2. Phosphorylation at Ser-273 is important for its activation. In terms of tissue distribution, poorly expressed in cerebellum, trachea, lung, appendix, and uterus.

It localises to the nucleus. It is found in the nucleolus. It catalyses the reaction L-seryl-[protein] + ATP = O-phospho-L-seryl-[protein] + ADP + H(+). The enzyme catalyses L-threonyl-[protein] + ATP = O-phospho-L-threonyl-[protein] + ADP + H(+). Its activity is regulated as follows. Autorepressed by intramolecular binding of the C-terminus which dissociates following phosphorylation by NEK2 isoform 1 in G1/S-arrested cells. NEK2 isoform 2 is largely not present in the nucleolus, and does not appear to phosphorylate NEK11. Activated in response to DNA damage. Inhibited by zinc. Protein kinase which plays an important role in the G2/M checkpoint response to DNA damage. Controls degradation of CDC25A by directly phosphorylating it on residues whose phosphorylation is required for BTRC-mediated polyubiquitination and degradation. This is Serine/threonine-protein kinase Nek11 from Homo sapiens (Human).